The primary structure comprises 355 residues: MIETDKLAAERIIAATPASSHEEVFERALRPRQLDDYVGQEKVRGQLEIFIEAAKRRREPLDHVLLFGPPGLGKTTLAHIIAREMGVNLRQTSGPVLERAGDLAALLTNLEANDVLFIDEIHRLSPVVEEILYPALEDYQIDIMIGEGPAARSVKLDLQPFTLVGATTRAGMLTNPLRDRFGIVARLEFYDADQLSRIVQRSASLLNAQIDPNGALEIAKRSRGTPRIANRLLRRVRDYAEVKADGQITAAIADAALAMLDVDPVGFDLMDRKLLEAILHKFDGGPVGIDNLAAAIGEERDTIEDVLEPYLIQQGFLQRTPRGRVATLLTYRHFGLAAPDAGSPVQSIWDTPDAQ.

The segment at 4-190 is large ATPase domain (RuvB-L); it reads TDKLAAERII…FGIVARLEFY (187 aa). ATP contacts are provided by residues Leu-29, Arg-30, Gly-71, Lys-74, Thr-75, Thr-76, 137-139, Arg-180, Tyr-190, and Arg-227; that span reads EDY. Residue Thr-75 participates in Mg(2+) binding. Residues 191 to 261 are small ATPAse domain (RuvB-S); sequence DADQLSRIVQ…IADAALAMLD (71 aa). A head domain (RuvB-H) region spans residues 264–355; sequence PVGFDLMDRK…QSIWDTPDAQ (92 aa). Positions 300, 319, and 324 each coordinate DNA.

The protein belongs to the RuvB family. As to quaternary structure, homohexamer. Forms an RuvA(8)-RuvB(12)-Holliday junction (HJ) complex. HJ DNA is sandwiched between 2 RuvA tetramers; dsDNA enters through RuvA and exits via RuvB. An RuvB hexamer assembles on each DNA strand where it exits the tetramer. Each RuvB hexamer is contacted by two RuvA subunits (via domain III) on 2 adjacent RuvB subunits; this complex drives branch migration. In the full resolvosome a probable DNA-RuvA(4)-RuvB(12)-RuvC(2) complex forms which resolves the HJ.

The protein resides in the cytoplasm. It carries out the reaction ATP + H2O = ADP + phosphate + H(+). In terms of biological role, the RuvA-RuvB-RuvC complex processes Holliday junction (HJ) DNA during genetic recombination and DNA repair, while the RuvA-RuvB complex plays an important role in the rescue of blocked DNA replication forks via replication fork reversal (RFR). RuvA specifically binds to HJ cruciform DNA, conferring on it an open structure. The RuvB hexamer acts as an ATP-dependent pump, pulling dsDNA into and through the RuvAB complex. RuvB forms 2 homohexamers on either side of HJ DNA bound by 1 or 2 RuvA tetramers; 4 subunits per hexamer contact DNA at a time. Coordinated motions by a converter formed by DNA-disengaged RuvB subunits stimulates ATP hydrolysis and nucleotide exchange. Immobilization of the converter enables RuvB to convert the ATP-contained energy into a lever motion, pulling 2 nucleotides of DNA out of the RuvA tetramer per ATP hydrolyzed, thus driving DNA branch migration. The RuvB motors rotate together with the DNA substrate, which together with the progressing nucleotide cycle form the mechanistic basis for DNA recombination by continuous HJ branch migration. Branch migration allows RuvC to scan DNA until it finds its consensus sequence, where it cleaves and resolves cruciform DNA. This Burkholderia multivorans (strain ATCC 17616 / 249) protein is Holliday junction branch migration complex subunit RuvB.